The chain runs to 270 residues: MLLAIDVRNTHTVVGLISGSGSHGKVEHHWRIRTESEVTADELALTIDGLIGDDAELLTGAAGLSTVPSVLHEVRVMLEQYWPSVPHVLIEPGVRTGIPLLVDNPKEVGADRIVNCLAAYQKYGSAAIVVDFGSSICVDVVSAKGEFLGGAIAPGVQVSSDAAAARSAALRRVELTRPRSVVGKNTVECMQAGAVFGFAALVDGLVNRIREDVDGFGGDDVTVVATGHSAPLVLEDLSTVQHYDRHLTLDGLRLVFERNRDNQRKLKQAR.

Residue 6 to 13 (DVRNTHTV) coordinates ATP. 109-112 (GADR) is a binding site for substrate. D111 serves as the catalytic Proton acceptor. D131 is a binding site for K(+). S134 is a binding site for ATP. T186 contributes to the substrate binding site.

The protein belongs to the type III pantothenate kinase family. In terms of assembly, homodimer. The cofactor is NH4(+). It depends on K(+) as a cofactor.

It localises to the cytoplasm. It carries out the reaction (R)-pantothenate + ATP = (R)-4'-phosphopantothenate + ADP + H(+). It functions in the pathway cofactor biosynthesis; coenzyme A biosynthesis; CoA from (R)-pantothenate: step 1/5. Catalyzes the phosphorylation of pantothenate (Pan), the first step in CoA biosynthesis. In Mycolicibacterium gilvum (strain PYR-GCK) (Mycobacterium gilvum (strain PYR-GCK)), this protein is Type III pantothenate kinase.